Reading from the N-terminus, the 207-residue chain is uncharacterized protein (207 aa).

This is an uncharacterized protein from Bacillus subtilis (strain 168).